Reading from the N-terminus, the 766-residue chain is Probable serine/threonine-protein kinase KKQ8 (766 aa).

5 disordered regions span residues M1–S165, G201–L240, S277–P297, T362–S384, and A417–Q437. Positions R14–L25 are enriched in low complexity. A compositionally biased stretch (basic and acidic residues) spans V49–P64. The segment covering L94–T120 has biased composition (polar residues). Residues E127 to R137 are compositionally biased toward basic and acidic residues. Polar residues-rich tracts occupy residues R140–S165 and P214–S223. Over residues S288–P297 the composition is skewed to basic and acidic residues. The span at D372–D382 shows a compositional bias: acidic residues. Residues K419–T430 are compositionally biased toward basic residues. Residues G449 to M752 form the Protein kinase domain. ATP is bound by residues V455–V463 and K493. D603 acts as the Proton acceptor in catalysis.

Belongs to the protein kinase superfamily. CAMK Ser/Thr protein kinase family. NPR/HAL subfamily. HAL5 sub-subfamily.

It localises to the cytoplasm. It carries out the reaction L-seryl-[protein] + ATP = O-phospho-L-seryl-[protein] + ADP + H(+). The catalysed reaction is L-threonyl-[protein] + ATP = O-phospho-L-threonyl-[protein] + ADP + H(+). The protein is Probable serine/threonine-protein kinase KKQ8 (KKQ8) of Candida glabrata (strain ATCC 2001 / BCRC 20586 / JCM 3761 / NBRC 0622 / NRRL Y-65 / CBS 138) (Yeast).